Here is a 782-residue protein sequence, read N- to C-terminus: MGSDWDEIKRLAADFQKAQLTSTLQKLSERNCVEIVTLLLEKQMLEVVFTNDGKEYITPDHLEREIQDELYVNGGRANLVEVSKTLNVDLSRIEVLAERIAAENPSVHLVLGQLIDEDYISHIAQEINEKLVQRGEISISELASQFDLPSDFLQHDVVEKHLGKIIKGRQDASNPRVFFTQAYIQRCKAKIRGALAAITRPINVAVILQQIGVQEKIFHSLLDEIAPAGQVTSKQANSQYVPHIYAKTQADWVNSFYKQNSFLEYDAIQKLGISDAKSYIRKQFPNEEFLFLKRVALGARLVELTVVTALNECSATKQYLDLTTILPSNLSEEDIEEVFSTIMAQKHSNPSNFVYLDGIVFSQPYLAQLVQPCKALAESQAKAAIDGGVYQQYIVEKTLAQKGNVSTQELEDDGKVDKRDERRKKASSGKAGGGAQGRETKTKSTKKHQRGKAAAQFDSDDEDDVQQGTRGGGGASKKAVKPLELVKTADIVKLITASLEEEGLEHLSKPIAALYTNQFNQTALARAQELFEATPQTNRRQTHAAIQDRINTLLIDIRLYEKGLKLFPQDTQTQLVKYLLKSLGNEICNELSLYVASECNLTVKNTNLNVDQRNKLAQECEAQYRAALLEQNKALNKSIDEFELATETVLKSCSMIIKKVDKKKDRLLIADHKRKLQKQLLECHEPALLLHLAALILFTTITGSILHASGKFVSAILQHIRGSLNEEQNALLLRYHDLVLQVLQATPDSNESKLANEHLQAMQTQVVELAQNFSRASVSKAD.

Positions V405–K478 are disordered.

Belongs to the UFL1 family.

Its function is as follows. E3 UFM1-protein ligase that mediates ufmylation of target proteins. This Drosophila sechellia (Fruit fly) protein is E3 UFM1-protein ligase 1 homolog.